The primary structure comprises 248 residues: UPF0736 protein BcerKBAB4_1085 (248 aa).

It belongs to the UPF0736 family.

In Bacillus mycoides (strain KBAB4) (Bacillus weihenstephanensis), this protein is UPF0736 protein BcerKBAB4_1085.